Consider the following 508-residue polypeptide: Acetyl-coenzyme A carboxylase carboxyl transferase subunit beta, chloroplastic (508 aa).

2 disordered regions span residues 30–51 and 173–234; these read PIEN…NIQG and NSSN…SSTH. Residues 35-47 show a composition bias toward basic and acidic residues; sequence SESKDPNRNDTDK. Positions 173–219 are enriched in low complexity; that stretch reads NSSNNNSSNENSSNENSSNENSSNENSSNDYISSSISSQSENSSQNE. The span at 220-234 shows a compositional bias: polar residues; the sequence is DITTSDQTIPESSTH. Residues 244 to 508 form the CoA carboxyltransferase N-terminal domain; sequence LWVQCENCYG…LHTFFPLNQN (265 aa). Residues Cys-248, Cys-251, Cys-267, and Cys-270 each coordinate Zn(2+). The C4-type zinc finger occupies 248–270; the sequence is CENCYGLNYKKFFKSKMHLCEQC.

This sequence belongs to the AccD/PCCB family. In terms of assembly, acetyl-CoA carboxylase is a heterohexamer composed of biotin carboxyl carrier protein, biotin carboxylase and 2 subunits each of ACCase subunit alpha and ACCase plastid-coded subunit beta (accD). The cofactor is Zn(2+).

Its subcellular location is the plastid. It is found in the chloroplast stroma. The catalysed reaction is N(6)-carboxybiotinyl-L-lysyl-[protein] + acetyl-CoA = N(6)-biotinyl-L-lysyl-[protein] + malonyl-CoA. The protein operates within lipid metabolism; malonyl-CoA biosynthesis; malonyl-CoA from acetyl-CoA: step 1/1. Functionally, component of the acetyl coenzyme A carboxylase (ACC) complex. Biotin carboxylase (BC) catalyzes the carboxylation of biotin on its carrier protein (BCCP) and then the CO(2) group is transferred by the transcarboxylase to acetyl-CoA to form malonyl-CoA. The polypeptide is Acetyl-coenzyme A carboxylase carboxyl transferase subunit beta, chloroplastic (Lactuca sativa (Garden lettuce)).